The following is a 386-amino-acid chain: ADP,ATP carrier protein, mitochondrial (386 aa).

A mitochondrion-targeting transit peptide spans 1–76 (ADNQHPTVYQ…ANASPVFVQA (76 aa)). Solcar repeat units lie at residues 83-176 (AAFA…FKRL), 188-281 (KWFA…LKPV), and 289-375 (DSFF…LQVI). The next 5 membrane-spanning stretches (helical) occupy residues 85 to 112 (FATD…VKLL), 153 to 177 (TANV…KRLF), 186 to 206 (YWKW…SSLL), 257 to 278 (FNIS…YDSL), and 292 to 312 (FASF…SYPI). Residues Arg-158 and Lys-170 each contribute to the ADP site. ADP is bound at residue Arg-316. The important for transport activity stretch occupies residues 316–321 (RRRMMM). Residues 316-321 (RRRMMM) carry the Nucleotide carrier signature motif motif. Residues 352 to 372 (AGANVLRAVAGAGVLAGYDKL) form a helical membrane-spanning segment.

It belongs to the mitochondrial carrier (TC 2.A.29) family. Monomer.

It localises to the mitochondrion inner membrane. It carries out the reaction ADP(in) + ATP(out) = ADP(out) + ATP(in). Its activity is regulated as follows. The matrix-open state (m-state) is inhibited by the membrane-permeable bongkrekic acid (BKA). The cytoplasmic-open state (c-state) is inhibited by the membrane-impermeable toxic inhibitor carboxyatractyloside (CATR). ADP:ATP antiporter that mediates import of ADP into the mitochondrial matrix for ATP synthesis, and export of ATP out to fuel the cell. Cycles between the cytoplasmic-open state (c-state) and the matrix-open state (m-state): operates by the alternating access mechanism with a single substrate-binding site intermittently exposed to either the cytosolic (c-state) or matrix (m-state) side of the inner mitochondrial membrane. The sequence is that of ADP,ATP carrier protein, mitochondrial (ANT1) from Solanum tuberosum (Potato).